Consider the following 59-residue polypeptide: Ferredoxin (59 aa).

2 4Fe-4S ferredoxin-type domains span residues 2–30 and 31–59; these read GKIT…LEVN and DHVE…LKVE. Cys12, Cys15, Cys18, Cys22, Cys41, Cys44, Cys47, and Cys51 together coordinate [4Fe-4S] cluster.

Requires [4Fe-4S] cluster as cofactor.

Ferredoxins are iron-sulfur proteins that transfer electrons in a wide variety of metabolic reactions. The protein is Ferredoxin of Entamoeba histolytica (strain ATCC 30459 / HM-1:IMSS / ABRM).